Here is a 352-residue protein sequence, read N- to C-terminus: Tropomodulin-3 (352 aa).

Phosphoserine is present on Ser25.

The protein belongs to the tropomodulin family. In terms of assembly, binds to the N-terminus of tropomyosin and to actin. Interacts with FLII. Ubiquitous.

It localises to the cytoplasm. The protein resides in the cytoskeleton. Its function is as follows. Blocks the elongation and depolymerization of the actin filaments at the pointed end. The Tmod/TM complex contributes to the formation of the short actin protofilament, which in turn defines the geometry of the membrane skeleton. This chain is Tropomodulin-3 (TMOD3), found in Homo sapiens (Human).